A 78-amino-acid polypeptide reads, in one-letter code: DNA import protein CedA1 (78 aa).

2 helical membrane-spanning segments follow: residues 12 to 32 and 53 to 73; these read STVT…GWAL and AIIA…ISYI.

As to quaternary structure, forms a complex composed of CedA, CedA1 and CedA2.

The protein localises to the cell membrane. In terms of biological role, part of the Ced system, which is involved in DNA import. The sequence is that of DNA import protein CedA1 from Sulfolobus acidocaldarius (strain ATCC 33909 / DSM 639 / JCM 8929 / NBRC 15157 / NCIMB 11770).